Here is a 504-residue protein sequence, read N- to C-terminus: Light-independent protochlorophyllide reductase subunit B (504 aa).

D36 is a [4Fe-4S] cluster binding site. D279 (proton donor) is an active-site residue. 414–415 (GL) is a binding site for substrate.

The protein belongs to the ChlB/BchB/BchZ family. As to quaternary structure, protochlorophyllide reductase is composed of three subunits; BchL, BchN and BchB. Forms a heterotetramer of two BchB and two BchN subunits. The cofactor is [4Fe-4S] cluster.

The catalysed reaction is chlorophyllide a + oxidized 2[4Fe-4S]-[ferredoxin] + 2 ADP + 2 phosphate = protochlorophyllide a + reduced 2[4Fe-4S]-[ferredoxin] + 2 ATP + 2 H2O. It participates in porphyrin-containing compound metabolism; bacteriochlorophyll biosynthesis (light-independent). In terms of biological role, component of the dark-operative protochlorophyllide reductase (DPOR) that uses Mg-ATP and reduced ferredoxin to reduce ring D of protochlorophyllide (Pchlide) to form chlorophyllide a (Chlide). This reaction is light-independent. The NB-protein (BchN-BchB) is the catalytic component of the complex. The chain is Light-independent protochlorophyllide reductase subunit B from Acidiphilium rubrum.